A 198-amino-acid chain; its full sequence is Na(+)-translocating NADH-quinone reductase subunit E (198 aa).

Helical transmembrane passes span 11–31 (SIFI…FLAV), 39–59 (FGLG…NNLV), 77–97 (FLNF…LEMI), 110–130 (GIFL…SFMV), 140–160 (VVYG…LAGI), and 176–196 (LGIT…FSGV).

Belongs to the NqrDE/RnfAE family. Composed of six subunits; NqrA, NqrB, NqrC, NqrD, NqrE and NqrF.

It localises to the cell inner membrane. It carries out the reaction a ubiquinone + n Na(+)(in) + NADH + H(+) = a ubiquinol + n Na(+)(out) + NAD(+). Functionally, NQR complex catalyzes the reduction of ubiquinone-1 to ubiquinol by two successive reactions, coupled with the transport of Na(+) ions from the cytoplasm to the periplasm. NqrA to NqrE are probably involved in the second step, the conversion of ubisemiquinone to ubiquinol. The chain is Na(+)-translocating NADH-quinone reductase subunit E from Vibrio vulnificus (strain CMCP6).